A 548-amino-acid chain; its full sequence is Protein swallow (548 aa).

Disordered stretches follow at residues 67-109 (AKTC…GRSS), 184-206 (NCQT…SSSF), and 358-428 (FSSV…ELIS). The segment covering 79–91 (QEDEDDYDEDVDG) has biased composition (acidic residues). Residues 189–205 (SNSDSNYNSNSNNSSSS) are compositionally biased toward low complexity. 2 positions are modified to phosphoserine: Ser362 and Ser368. The segment covering 388 to 402 (APNNSETSQPSSNDS) has biased composition (polar residues). Positions 406 to 420 (VEAHEEERPSSRRQW) are enriched in basic and acidic residues. Phosphoserine is present on residues Ser463, Ser471, Ser475, Ser483, Ser485, and Ser487.

May be a homo- or heterodimer.

It is found in the nucleus. Its function is as follows. Has a role in localizing bicoid mRNA at the anterior margin of the oocyte during oogenesis, and a poorly characterized role in nuclear divisions in early embryogenesis. The chain is Protein swallow (swa) from Drosophila melanogaster (Fruit fly).